The primary structure comprises 111 residues: Nucleoid-associated protein NMC1380 (111 aa).

This sequence belongs to the YbaB/EbfC family. In terms of assembly, homodimer.

The protein resides in the cytoplasm. It is found in the nucleoid. Binds to DNA and alters its conformation. May be involved in regulation of gene expression, nucleoid organization and DNA protection. This is Nucleoid-associated protein NMC1380 from Neisseria meningitidis serogroup C / serotype 2a (strain ATCC 700532 / DSM 15464 / FAM18).